A 392-amino-acid polypeptide reads, in one-letter code: Serine protease ea (392 aa).

The first 19 residues, 1 to 19 (MLKPSIICLFLGILAKSSA), serve as a signal peptide directing secretion. A propeptide spans 20 to 127 (GQFYFPNEAA…GQCGNILSNR (108 aa)) (activation peptide). The Clip domain occupies 36 to 89 (RCITPNRERALCIHLEDCKYLYGLLTTTPLRDTDRLYLSRSQCGYTNGKVLICC). Cystine bridges form between Cys37–Cys88, Cys47–Cys78, and Cys53–Cys89. Asn107 carries an N-linked (GlcNAc...) asparagine glycan. Disulfide bonds link Cys120/Cys260, Cys158/Cys174, Cys202/Cys212, Cys307/Cys324, and Cys334/Cys367. The region spanning 128 to 391 (IYGGMKTKID…YVDWIQNTIE (264 aa)) is the Peptidase S1 domain. The active-site Charge relay system is His173. Ca(2+)-binding residues include Glu193, Asp195, Thr198, and Asp201. Catalysis depends on Asp240, which acts as the Charge relay system. Ser338 (charge relay system) is an active-site residue.

Belongs to the peptidase S1 family. CLIP subfamily. Interacts with Spn27A; the two proteins are covalently linked leading to inhibition of ea catalytic activity. Interacts (via Peptidase domain) with snk (via N-terminal prodomain); leads to proteolytic activation of ea by snk. Sulfation of a vitelline membrane component by pip is required for proteolytic cleavage of ea by snk but not for the interaction of ea with snk. Post-translationally, proteolytically cleaved by snk. Activation peptide and active catalytic domain remain associated by a disulfide bond. Processed ea/easter is present in extremely low amounts in the early embryo as it is rapidly converted into a high molecular mass complex made up of ea covalently bound to the serpin Spn27A. Zymogen activation is also controlled by a negative feedback loop from Dorsal.

The protein localises to the secreted. Activated proteolytically by snk; activation requires both activation of the ndl-gd-snk protease cascade and sulfation of a vitelline membrane component by pip. Inhibited by binding of the serpin Spn27A. Component of the extracellular signaling pathway that establishes the dorsal-ventral pathway of the embryo. A protease cascade involving ndl, gd, snk and ea results in activation of the spz Toll receptor ligand; acts downstream of ndl, gd and snk and is required for proteolytic processing of spz. Activation of ea requires both activation of the ndl-gd-snk protease cascade and sulfation of a vitelline membrane component by pip. Localized activation of the Toll receptor in the ventral region of the embryo defines cell identities along the dorsal-ventral continuum. The sequence is that of Serine protease ea from Drosophila melanogaster (Fruit fly).